A 252-amino-acid chain; its full sequence is N-acetylglucosaminyl-phosphatidylinositol de-N-acetylase (252 aa).

A helical membrane pass occupies residues 2 to 22 (ELVGFLCVAVAVLTWGFLRVW). Residues 23-252 (NSAERMRSPE…YMRINSLRFL (230 aa)) are Cytoplasmic-facing.

Belongs to the PIGL family.

Its subcellular location is the endoplasmic reticulum membrane. The enzyme catalyses a 6-(N-acetyl-alpha-D-glucosaminyl)-1-(1,2-diacyl-sn-glycero-3-phospho)-1D-myo-inositol + H2O = a 6-(alpha-D-glucosaminyl)-1-(1,2-diacyl-sn-glycero-3-phospho)-1D-myo-inositol + acetate. It participates in glycolipid biosynthesis; glycosylphosphatidylinositol-anchor biosynthesis. Functionally, catalyzes the second step of glycosylphosphatidylinositol (GPI) biosynthesis, which is the de-N-acetylation of N-acetylglucosaminyl-phosphatidylinositol. The chain is N-acetylglucosaminyl-phosphatidylinositol de-N-acetylase (Pigl) from Mus musculus (Mouse).